The chain runs to 198 residues: Recombination protein RecR (198 aa).

The C4-type zinc-finger motif lies at Cys56 to Cys71. One can recognise a Toprim domain in the interval His79 to Pro174.

This sequence belongs to the RecR family.

Functionally, may play a role in DNA repair. It seems to be involved in an RecBC-independent recombinational process of DNA repair. It may act with RecF and RecO. The protein is Recombination protein RecR of Acinetobacter baylyi (strain ATCC 33305 / BD413 / ADP1).